Consider the following 386-residue polypeptide: Phosphoglycerate kinase (386 aa).

Substrate contacts are provided by residues 21–23, Arg-36, 59–62, Arg-112, and Arg-145; these read DLN and HLGR. ATP contacts are provided by residues Lys-196, Glu-313, and 339–342; that span reads GGDT.

Belongs to the phosphoglycerate kinase family. As to quaternary structure, monomer.

Its subcellular location is the cytoplasm. The enzyme catalyses (2R)-3-phosphoglycerate + ATP = (2R)-3-phospho-glyceroyl phosphate + ADP. Its pathway is carbohydrate degradation; glycolysis; pyruvate from D-glyceraldehyde 3-phosphate: step 2/5. The polypeptide is Phosphoglycerate kinase (Haemophilus influenzae (strain PittGG)).